Here is a 161-residue protein sequence, read N- to C-terminus: Allophycocyanin beta chain (161 aa).

N4-methylasparagine is present on N71. C81 contacts (2R,3E)-phycocyanobilin.

This sequence belongs to the phycobiliprotein family. Heterodimer of an alpha and a beta chain. Post-translationally, contains one covalently linked phycocyanobilin chromophore.

It localises to the plastid. The protein resides in the chloroplast thylakoid membrane. In terms of biological role, light-harvesting photosynthetic bile pigment-protein from the phycobiliprotein complex. Allophycocyanin has a maximum absorption at approximately 650 nanometers. This Porphyra purpurea (Red seaweed) protein is Allophycocyanin beta chain (apcB).